Here is an 890-residue protein sequence, read N- to C-terminus: Alanine--tRNA ligase (890 aa).

4 residues coordinate Zn(2+): His-564, His-568, Cys-677, and His-681.

This sequence belongs to the class-II aminoacyl-tRNA synthetase family. The cofactor is Zn(2+).

Its subcellular location is the cytoplasm. It carries out the reaction tRNA(Ala) + L-alanine + ATP = L-alanyl-tRNA(Ala) + AMP + diphosphate. In terms of biological role, catalyzes the attachment of alanine to tRNA(Ala) in a two-step reaction: alanine is first activated by ATP to form Ala-AMP and then transferred to the acceptor end of tRNA(Ala). Also edits incorrectly charged Ser-tRNA(Ala) and Gly-tRNA(Ala) via its editing domain. The protein is Alanine--tRNA ligase of Rhodopseudomonas palustris (strain BisB18).